The primary structure comprises 727 residues: NADH-ubiquinone oxidoreductase 75 kDa subunit, mitochondrial (727 aa).

The N-terminal 23 residues, 1-23, are a transit peptide targeting the mitochondrion; it reads MLRIPVRKALVGLSKSSKGCVRT. A 2Fe-2S ferredoxin-type domain is found at 30–108; it reads NLIEVFVDGQ…GWNILTNSEK (79 aa). [2Fe-2S] cluster-binding residues include Cys-64, Cys-75, and Cys-78. Lys-84 carries the post-translational modification N6-acetyllysine. Residue Cys-92 participates in [2Fe-2S] cluster binding. One can recognise a 4Fe-4S His(Cys)3-ligated-type domain in the interval 108–147; sequence KTKKAREGVMEFLLANHPLDCPICDQGGECDLQDQSMMFG. Positions 124, 128, 131, 137, 176, 179, 182, and 226 each coordinate [4Fe-4S] cluster. The region spanning 245 to 301 is the 4Fe-4S Mo/W bis-MGD-type domain; the sequence is TRKTESIDVMDAVGSNIVVSTRTGEVMRILPRMHEDINEEWISDKTRFAYDGLKRQR. N6-acetyllysine is present on residues Lys-499 and Lys-709.

It belongs to the complex I 75 kDa subunit family. As to quaternary structure, core subunit of respiratory chain NADH dehydrogenase (Complex I) which is composed of 45 different subunits. This is the largest subunit of complex I and it is a component of the iron-sulfur (IP) fragment of the enzyme. Complex I associates with ubiquinol-cytochrome reductase complex (Complex III) to form supercomplexes. Interacts with MDM2 and AKAP1. It depends on [2Fe-2S] cluster as a cofactor. The cofactor is [4Fe-4S] cluster.

The protein resides in the mitochondrion inner membrane. The enzyme catalyses a ubiquinone + NADH + 5 H(+)(in) = a ubiquinol + NAD(+) + 4 H(+)(out). Its function is as follows. Core subunit of the mitochondrial membrane respiratory chain NADH dehydrogenase (Complex I) which catalyzes electron transfer from NADH through the respiratory chain, using ubiquinone as an electron acceptor. Essential for catalysing the entry and efficient transfer of electrons within complex I. Plays a key role in the assembly and stability of complex I and participates in the association of complex I with ubiquinol-cytochrome reductase complex (Complex III) to form supercomplexes. The chain is NADH-ubiquinone oxidoreductase 75 kDa subunit, mitochondrial (NDUFS1) from Bos taurus (Bovine).